The sequence spans 221 residues: ATP phosphoribosyltransferase (221 aa).

Belongs to the ATP phosphoribosyltransferase family. Short subfamily. As to quaternary structure, heteromultimer composed of HisG and HisZ subunits.

Its subcellular location is the cytoplasm. It catalyses the reaction 1-(5-phospho-beta-D-ribosyl)-ATP + diphosphate = 5-phospho-alpha-D-ribose 1-diphosphate + ATP. Its pathway is amino-acid biosynthesis; L-histidine biosynthesis; L-histidine from 5-phospho-alpha-D-ribose 1-diphosphate: step 1/9. Catalyzes the condensation of ATP and 5-phosphoribose 1-diphosphate to form N'-(5'-phosphoribosyl)-ATP (PR-ATP). Has a crucial role in the pathway because the rate of histidine biosynthesis seems to be controlled primarily by regulation of HisG enzymatic activity. This chain is ATP phosphoribosyltransferase, found in Anaeromyxobacter dehalogenans (strain 2CP-1 / ATCC BAA-258).